The following is a 130-amino-acid chain: uncharacterized protein (130 aa).

This is an uncharacterized protein from Sputnik virophage.